Reading from the N-terminus, the 298-residue chain is MPMAKLRNIIKTLSIFFFLIAATAPSLSSATSATDTFVFGGCSQQKFSPASAYESNLNSLLTSLVNSATYSSYNNFTIMGSSSSDTARGLFQCRGDLSMPDCATCVARAVSQVGPLCPFTCGGALQLAGCYIKYDNISFLGQEDKTVVLKKCGSSEGYNTDGISRRDAVLTELVNGGGYFRAGGSGDVQGMGQCVGDLTVSECQDCLGTAIGRLKNDCGTAVFGDMFLAKCYARYSTDGAQHYAKSHNYKTNYGGEKTFAIIIGLLAAVVLLIIFLLFLRGVCSRGGDFSILHSFTLI.

The N-terminal stretch at 1 to 30 (MPMAKLRNIIKTLSIFFFLIAATAPSLSSA) is a signal peptide. Topologically, residues 31-258 (TSATDTFVFG…YKTNYGGEKT (228 aa)) are extracellular. 2 Gnk2-homologous domains span residues 35–139 (DTFV…NISF) and 140–240 (LGQE…TDGA). Intrachain disulfides connect cysteine 42–cysteine 117, cysteine 93–cysteine 102, cysteine 105–cysteine 130, cysteine 152–cysteine 218, cysteine 194–cysteine 203, and cysteine 206–cysteine 231. A helical transmembrane segment spans residues 259–279 (FAIIIGLLAAVVLLIIFLLFL). Residues 259 to 279 (FAIIIGLLAAVVLLIIFLLFL) are necessary and sufficient for plasmodesmal targeting. At 280–298 (RGVCSRGGDFSILHSFTLI) the chain is on the cytoplasmic side.

The protein belongs to the cysteine-rich repeat secretory protein family. Plasmodesmata-located proteins (PDLD) subfamily. As to quaternary structure, (Microbial infection) Interacts with Grapevine fanleaf virus (GFLV) 2B-MP. As to expression, highly expressed in lateral root and elongation zone.

The protein localises to the cell membrane. The protein resides in the cell junction. It localises to the plasmodesma. Its function is as follows. Modulates cell-to-cell trafficking. The polypeptide is Plasmodesmata-located protein 7 (Arabidopsis thaliana (Mouse-ear cress)).